Reading from the N-terminus, the 148-residue chain is UPF0179 protein UNCMA_27840 (148 aa).

The protein belongs to the UPF0179 family.

In Methanocella arvoryzae (strain DSM 22066 / NBRC 105507 / MRE50), this protein is UPF0179 protein UNCMA_27840.